An 866-amino-acid polypeptide reads, in one-letter code: Dimethylglycine dehydrogenase, mitochondrial (866 aa).

The transit peptide at 1–50 (MLRPGAQLLRGLLLRSCPLQGSPGRPRSVCGREGEEKPPLSAETQWKDRA) directs the protein to the mitochondrion. The interval 20 to 42 (QGSPGRPRSVCGREGEEKPPLSA) is disordered. Residues 59 to 60 (CV), 80 to 81 (EK), and 87 to 95 (GSTWHAAGL) contribute to the FAD site. Position 91 is a tele-8alpha-FAD histidine (histidine 91). At lysine 114 the chain carries N6-acetyllysine. Residue lysine 148 is modified to N6-acetyllysine; alternate. Lysine 148 is subject to N6-succinyllysine; alternate. Lysine 168 carries the post-translational modification N6-acetyllysine. Residue valine 219 participates in FAD binding. Position 223 is an N6-acetyllysine (lysine 223). Position 251 (tryptophan 251) interacts with FAD. N6-succinyllysine occurs at positions 317 and 319. N6-acetyllysine is present on residues lysine 335 and lysine 360. Position 397–402 (397–402 (FGYGII)) interacts with FAD. Residues lysine 434 and lysine 523 each carry the N6-acetyllysine; alternate modification. N6-succinyllysine; alternate occurs at positions 434 and 523. 580–582 (ELT) contributes to the (6S)-5,6,7,8-tetrahydrofolate binding site. The residue at position 655 (lysine 655) is an N6-acetyllysine; alternate. Lysine 655 is modified (N6-succinyllysine; alternate). Residues tyrosine 676, 683 to 685 (ELY), and tyrosine 744 contribute to the (6S)-5,6,7,8-tetrahydrofolate site. Lysine 764 bears the N6-acetyllysine mark. Lysine 795 carries the N6-succinyllysine modification.

The protein belongs to the GcvT family. As to quaternary structure, monomer. FAD is required as a cofactor.

The protein resides in the mitochondrion. The enzyme catalyses (6S)-5,6,7,8-tetrahydrofolyl-(gamma-L-Glu)(n) + N,N-dimethylglycine + oxidized [electron-transfer flavoprotein] + H(+) = (6R)-5,10-methylenetetrahydrofolyl-(gamma-L-Glu)(n) + sarcosine + reduced [electron-transfer flavoprotein]. It participates in amine and polyamine degradation; betaine degradation; sarcosine from betaine: step 2/2. Functionally, catalyzes the demethylation of N,N-dimethylglycine to sarcosine. Also has activity with sarcosine in vitro. The sequence is that of Dimethylglycine dehydrogenase, mitochondrial (DMGDH) from Homo sapiens (Human).